The following is a 273-amino-acid chain: 3-methyl-2-oxobutanoate hydroxymethyltransferase (273 aa).

Aspartate 53 and aspartate 92 together coordinate Mg(2+). Residues 53-54, aspartate 92, and lysine 120 contribute to the 3-methyl-2-oxobutanoate site; that span reads DS. Glutamate 122 contacts Mg(2+). Catalysis depends on glutamate 189, which acts as the Proton acceptor.

Belongs to the PanB family. As to quaternary structure, homodecamer; pentamer of dimers. The cofactor is Mg(2+).

The protein localises to the cytoplasm. The catalysed reaction is 3-methyl-2-oxobutanoate + (6R)-5,10-methylene-5,6,7,8-tetrahydrofolate + H2O = 2-dehydropantoate + (6S)-5,6,7,8-tetrahydrofolate. It functions in the pathway cofactor biosynthesis; (R)-pantothenate biosynthesis; (R)-pantoate from 3-methyl-2-oxobutanoate: step 1/2. In terms of biological role, catalyzes the reversible reaction in which hydroxymethyl group from 5,10-methylenetetrahydrofolate is transferred onto alpha-ketoisovalerate to form ketopantoate. In Cupriavidus necator (strain ATCC 17699 / DSM 428 / KCTC 22496 / NCIMB 10442 / H16 / Stanier 337) (Ralstonia eutropha), this protein is 3-methyl-2-oxobutanoate hydroxymethyltransferase.